Reading from the N-terminus, the 155-residue chain is MSRRGTVEEKTAKSDPIYRNRLVNMLVNRILKHGKKSLAYQILYRAVKKIQQKTETNPLSVLRQAIRGVTPDIAVKARRVGGSTHQVPIEIGSTQGKALAIRWLLGAARKRPGRNMAFKLSSELVDAAKGSGDAVRKKEETHRMAEANRAFAHFR.

As to quaternary structure, component of the chloroplast small ribosomal subunit (SSU). Mature 70S chloroplast ribosomes of higher plants consist of a small (30S) and a large (50S) subunit. The 30S small subunit contains 1 molecule of ribosomal RNA (16S rRNA) and 24 different proteins. The 50S large subunit contains 3 rRNA molecules (23S, 5S and 4.5S rRNA) and 33 different proteins.

The protein localises to the plastid. It localises to the chloroplast. Functionally, component of the chloroplast ribosome (chloro-ribosome), a dedicated translation machinery responsible for the synthesis of chloroplast genome-encoded proteins, including proteins of the transcription and translation machinery and components of the photosynthetic apparatus. In Spinacia oleracea (Spinach), this protein is Small ribosomal subunit protein uS7cz/uS7cy (rps7-A).